The following is a 216-amino-acid chain: Neurotrophic factor BDNF precursor form (216 aa).

Positions 1–108 are excised as a propeptide; that stretch reads PMKEVSIRGQ…AANMSMRVRR (108 aa). An N-linked (GlcNAc...) asparagine glycan is attached at Asn-101. Cys-121 and Cys-188 are joined by a disulfide.

Belongs to the NGF-beta family.

The protein localises to the secreted. In terms of biological role, promotes the survival of neuronal populations that are all located either in the central nervous system or directly connected to it. This is Neurotrophic factor BDNF precursor form (BDNF) from Cylindrophis ruffus (Red-tailed pipe snake).